Here is a 210-residue protein sequence, read N- to C-terminus: dTTP/UTP pyrophosphatase (210 aa).

Residue Asp-80 is the Proton acceptor of the active site.

This sequence belongs to the Maf family. YhdE subfamily. It depends on a divalent metal cation as a cofactor.

It localises to the cytoplasm. The enzyme catalyses dTTP + H2O = dTMP + diphosphate + H(+). It catalyses the reaction UTP + H2O = UMP + diphosphate + H(+). Its function is as follows. Nucleoside triphosphate pyrophosphatase that hydrolyzes dTTP and UTP. May have a dual role in cell division arrest and in preventing the incorporation of modified nucleotides into cellular nucleic acids. The sequence is that of dTTP/UTP pyrophosphatase from Nitratidesulfovibrio vulgaris (strain ATCC 29579 / DSM 644 / CCUG 34227 / NCIMB 8303 / VKM B-1760 / Hildenborough) (Desulfovibrio vulgaris).